Consider the following 419-residue polypeptide: MEPILIPSQHNRLVIPSEPNEEEFNYIADGYKGKLNIDSYDIISTIGSGSYGEVCIVREKSTKQVYAMKKIYYTEVSDTELVKKRALRERDAMVICNNKNNKRAPKLYCSFIDDNEGVFYYVMEFIAGGDFNSYCYKRLVDGKKFTEEEIKFYIAELVLCLEAFHSYGLLHRDVKPENLMINKDGHLVLGDFGSSKLANNSGGGGGNFGNTLTVPMSTSYSTSPSSSISSSLLGGSGGFTPSHWNGMAGSAGSSFGSSSLGRSFDNTPPNFNSFLRNPHSSYTSYIGTPQYMAVEVVQGVNYSKLCDFWSLGAILFELVTGQALFVESPDTTEQKIRENIGNWRGLLNTAVQKNQPMSKQAESLIRECIAPERKRPDASTIKKHPFFEGINWEEMANFNVEPPFKPTLSSDDDISYFTN.

In terms of domain architecture, Protein kinase spans 40–387 (YDIISTIGSG…ASTIKKHPFF (348 aa)). Residues 46-54 (IGSGSYGEV) and lysine 69 contribute to the ATP site. Aspartate 173 serves as the catalytic Proton acceptor. Residues 388–419 (EGINWEEMANFNVEPPFKPTLSSDDDISYFTN) form the AGC-kinase C-terminal domain.

This sequence belongs to the protein kinase superfamily. AGC Ser/Thr protein kinase family.

The catalysed reaction is L-seryl-[protein] + ATP = O-phospho-L-seryl-[protein] + ADP + H(+). It catalyses the reaction L-threonyl-[protein] + ATP = O-phospho-L-threonyl-[protein] + ADP + H(+). This is Probable serine/threonine-protein kinase DDB_G0290859 from Dictyostelium discoideum (Social amoeba).